We begin with the raw amino-acid sequence, 163 residues long: Large ribosomal subunit protein uL15 (163 aa).

This sequence belongs to the universal ribosomal protein uL15 family. As to quaternary structure, part of the 50S ribosomal subunit.

Functionally, binds to the 23S rRNA. The sequence is that of Large ribosomal subunit protein uL15 from Orientia tsutsugamushi (strain Boryong) (Rickettsia tsutsugamushi).